Reading from the N-terminus, the 90-residue chain is Sec-independent protein translocase protein TatA (90 aa).

The chain crosses the membrane as a helical span at residues 1-21 (MGSMSIWHWVIVAVIVMLLFG). A disordered region spans residues 44–90 (AEDETPPAVQAAPPPAEPVRTIPHATETSPGTAIPASHLPGGERKPV).

This sequence belongs to the TatA/E family. The Tat system comprises two distinct complexes: a TatABC complex, containing multiple copies of TatA, TatB and TatC subunits, and a separate TatA complex, containing only TatA subunits. Substrates initially bind to the TatABC complex, which probably triggers association of the separate TatA complex to form the active translocon.

The protein localises to the cell inner membrane. In terms of biological role, part of the twin-arginine translocation (Tat) system that transports large folded proteins containing a characteristic twin-arginine motif in their signal peptide across membranes. TatA could form the protein-conducting channel of the Tat system. The sequence is that of Sec-independent protein translocase protein TatA from Methylobacterium radiotolerans (strain ATCC 27329 / DSM 1819 / JCM 2831 / NBRC 15690 / NCIMB 10815 / 0-1).